The sequence spans 81 residues: Photosystem I iron-sulfur center (81 aa).

4Fe-4S ferredoxin-type domains lie at 2 to 31 (AHSV…MIPW) and 39 to 68 (IASA…VRVY). Residues cysteine 11, cysteine 14, cysteine 17, cysteine 21, cysteine 48, cysteine 51, cysteine 54, and cysteine 58 each coordinate [4Fe-4S] cluster.

As to quaternary structure, the eukaryotic PSI reaction center is composed of at least 11 subunits. [4Fe-4S] cluster is required as a cofactor.

Its subcellular location is the plastid. It is found in the chloroplast thylakoid membrane. The catalysed reaction is reduced [plastocyanin] + hnu + oxidized [2Fe-2S]-[ferredoxin] = oxidized [plastocyanin] + reduced [2Fe-2S]-[ferredoxin]. Functionally, apoprotein for the two 4Fe-4S centers FA and FB of photosystem I (PSI); essential for photochemical activity. FB is the terminal electron acceptor of PSI, donating electrons to ferredoxin. The C-terminus interacts with PsaA/B/D and helps assemble the protein into the PSI complex. Required for binding of PsaD and PsaE to PSI. PSI is a plastocyanin-ferredoxin oxidoreductase, converting photonic excitation into a charge separation, which transfers an electron from the donor P700 chlorophyll pair to the spectroscopically characterized acceptors A0, A1, FX, FA and FB in turn. This chain is Photosystem I iron-sulfur center, found in Adiantum capillus-veneris (Maidenhair fern).